Reading from the N-terminus, the 368-residue chain is Glutaminyl-peptide cyclotransferase (368 aa).

Positions methionine 1–alanine 23 are cleaved as a signal peptide. N-linked (GlcNAc...) asparagine glycosylation is present at asparagine 53. Cysteine 143 and cysteine 169 are disulfide-bonded. Aspartate 164 provides a ligand contact to Zn(2+). Glutamate 207 acts as the Proton acceptor in catalysis. Glutamate 208 contacts Zn(2+). Aspartate 254 (proton acceptor) is an active-site residue. An N-linked (GlcNAc...) asparagine glycan is attached at asparagine 292. Residue histidine 336 coordinates Zn(2+). An N-linked (GlcNAc...) asparagine glycan is attached at asparagine 352.

This sequence belongs to the glutaminyl-peptide cyclotransferase family. As to expression, expressed by the venom gland.

The protein resides in the secreted. The catalysed reaction is N-terminal L-glutaminyl-[peptide] = N-terminal 5-oxo-L-prolyl-[peptide] + NH4(+). Functionally, responsible for the biosynthesis of pyroglutamyl peptides. Has a bias against acidic and tryptophan residues adjacent to the N-terminal glutaminyl residue and a lack of importance of chain length after the second residue. Also catalyzes N-terminal pyroglutamate formation. The sequence is that of Glutaminyl-peptide cyclotransferase (QPCT) from Boiga irregularis (Brown tree snake).